The following is a 425-amino-acid chain: UDP-N-acetylglucosamine 1-carboxyvinyltransferase (425 aa).

25–26 contributes to the phosphoenolpyruvate binding site; the sequence is KN. R95 is a binding site for UDP-N-acetyl-alpha-D-glucosamine. Residue C119 is the Proton donor of the active site. A 2-(S-cysteinyl)pyruvic acid O-phosphothioketal modification is found at C119. Residues 124–128, D306, and I328 each bind UDP-N-acetyl-alpha-D-glucosamine; that span reads RPVDQ.

The protein belongs to the EPSP synthase family. MurA subfamily.

It localises to the cytoplasm. The catalysed reaction is phosphoenolpyruvate + UDP-N-acetyl-alpha-D-glucosamine = UDP-N-acetyl-3-O-(1-carboxyvinyl)-alpha-D-glucosamine + phosphate. Its pathway is cell wall biogenesis; peptidoglycan biosynthesis. Its function is as follows. Cell wall formation. Adds enolpyruvyl to UDP-N-acetylglucosamine. The sequence is that of UDP-N-acetylglucosamine 1-carboxyvinyltransferase from Thermus thermophilus (strain ATCC 27634 / DSM 579 / HB8).